The primary structure comprises 421 residues: Growth arrest-specific protein 7 (421 aa).

Residues 1 to 117 (MATALQKPGM…SPGRKQSKEN (117 aa)) form a disordered region. In terms of domain architecture, WW spans 22–55 (VILPPGWHSYLSPQGRRYYVNTTTNETTWERPSS). Positions 41–52 (VNTTTNETTWER) are enriched in polar residues. The span at 53–65 (PSSSPGISASPAP) shows a compositional bias: low complexity. 2 positions are modified to phosphoserine: Ser62 and Ser108. A compositionally biased stretch (polar residues) spans 95–117 (RKSTGDSQNLGSSSPGRKQSKEN). Residues 141–401 (TEWSYCDYFW…LLRKVDPAKD (261 aa)) form the F-BAR domain. A coiled-coil region spans residues 254 to 328 (ENFKKDMKKC…RKSTQAGDDL (75 aa)).

As to expression, expressed abundantly in brain with lower levels in heart and testis. In the brain, expressed prominently in the Purkinje layer of the cerebellum, moderately in hippocampus, and less extensively in cerebral cortex and caudate putamen.

It is found in the cytoplasm. May play a role in promoting maturation and morphological differentiation of cerebellar neurons. The protein is Growth arrest-specific protein 7 (Gas7) of Mus musculus (Mouse).